The chain runs to 310 residues: Putative RING-H2 finger protein ATL53 (310 aa).

Residues 62–82 form a helical membrane-spanning segment; that stretch reads VIAIFGIFATAFLLAAYYTLV. The segment at 155-197 adopts an RING-type; atypical zinc-finger fold; it reads CSICLGEFNEDESLRLLPKCNHTFHVVCIDRWLKSHSNCPLCR.

It belongs to the RING-type zinc finger family. ATL subfamily.

The protein localises to the membrane. The enzyme catalyses S-ubiquitinyl-[E2 ubiquitin-conjugating enzyme]-L-cysteine + [acceptor protein]-L-lysine = [E2 ubiquitin-conjugating enzyme]-L-cysteine + N(6)-ubiquitinyl-[acceptor protein]-L-lysine.. It participates in protein modification; protein ubiquitination. This chain is Putative RING-H2 finger protein ATL53 (ATL53), found in Arabidopsis thaliana (Mouse-ear cress).